The chain runs to 143 residues: Ribosome-binding factor A (143 aa).

The span at 119–129 (AVGDKPAVPRD) shows a compositional bias: basic and acidic residues. Residues 119-143 (AVGDKPAVPRDDNDDPVSDNPERDA) form a disordered region.

This sequence belongs to the RbfA family. As to quaternary structure, monomer. Binds 30S ribosomal subunits, but not 50S ribosomal subunits or 70S ribosomes.

The protein resides in the cytoplasm. Its function is as follows. One of several proteins that assist in the late maturation steps of the functional core of the 30S ribosomal subunit. Associates with free 30S ribosomal subunits (but not with 30S subunits that are part of 70S ribosomes or polysomes). Required for efficient processing of 16S rRNA. May interact with the 5'-terminal helix region of 16S rRNA. The sequence is that of Ribosome-binding factor A from Marinobacter nauticus (strain ATCC 700491 / DSM 11845 / VT8) (Marinobacter aquaeolei).